A 375-amino-acid polypeptide reads, in one-letter code: Homoserine O-succinyltransferase (375 aa).

The AB hydrolase-1 domain maps to 48–358 (NAVLVCHALS…DAGHDSFLLD (311 aa)). Ser-154 acts as the Nucleophile in catalysis. Substrate is bound at residue Arg-224. Residues Asp-319 and His-352 contribute to the active site. Position 353 (Asp-353) interacts with substrate.

Belongs to the AB hydrolase superfamily. MetX family. In terms of assembly, homodimer.

It localises to the cytoplasm. The catalysed reaction is L-homoserine + succinyl-CoA = O-succinyl-L-homoserine + CoA. Its pathway is amino-acid biosynthesis; L-methionine biosynthesis via de novo pathway; O-succinyl-L-homoserine from L-homoserine: step 1/1. Its function is as follows. Transfers a succinyl group from succinyl-CoA to L-homoserine, forming succinyl-L-homoserine. This Aromatoleum aromaticum (strain DSM 19018 / LMG 30748 / EbN1) (Azoarcus sp. (strain EbN1)) protein is Homoserine O-succinyltransferase.